A 450-amino-acid chain; its full sequence is Phosphoglucosamine mutase (450 aa).

Serine 97 serves as the catalytic Phosphoserine intermediate. Mg(2+) is bound by residues serine 97, aspartate 236, aspartate 238, and aspartate 240. Serine 97 carries the post-translational modification Phosphoserine.

Belongs to the phosphohexose mutase family. The cofactor is Mg(2+). Activated by phosphorylation.

It carries out the reaction alpha-D-glucosamine 1-phosphate = D-glucosamine 6-phosphate. Its function is as follows. Catalyzes the conversion of glucosamine-6-phosphate to glucosamine-1-phosphate. This Prochlorococcus marinus (strain AS9601) protein is Phosphoglucosamine mutase.